We begin with the raw amino-acid sequence, 382 residues long: 2-epi-valiolone synthase (382 aa).

NAD(+) is bound by residues 92–95 (EKSK), 124–128 (GVVVD), 148–149 (TT), lysine 161, lysine 170, and 188–191 (HLRT). The Zn(2+) site is built by glutamate 203, histidine 266, and histidine 283.

It belongs to the sugar phosphate cyclases superfamily. EVS family. The cofactor is NAD(+). Requires Co(2+) as cofactor. Zn(2+) is required as a cofactor.

It catalyses the reaction D-sedoheptulose 7-phosphate = 2-epi-valiolone + phosphate. Catalyzes the conversion of sedoheptulose 7-phosphate to 2-epi-valiolone, which may serve as an alternative precursor for aminocyclitol biosynthesis. In Actinosynnema mirum (strain ATCC 29888 / DSM 43827 / JCM 3225 / NBRC 14064 / NCIMB 13271 / NRRL B-12336 / IMRU 3971 / 101), this protein is 2-epi-valiolone synthase.